A 396-amino-acid polypeptide reads, in one-letter code: NADH-quinone oxidoreductase subunit D (396 aa).

The protein belongs to the complex I 49 kDa subunit family. NDH-1 is composed of 14 different subunits. Subunits NuoB, C, D, E, F, and G constitute the peripheral sector of the complex.

The protein resides in the cell inner membrane. The enzyme catalyses a quinone + NADH + 5 H(+)(in) = a quinol + NAD(+) + 4 H(+)(out). Functionally, NDH-1 shuttles electrons from NADH, via FMN and iron-sulfur (Fe-S) centers, to quinones in the respiratory chain. The immediate electron acceptor for the enzyme in this species is believed to be ubiquinone. Couples the redox reaction to proton translocation (for every two electrons transferred, four hydrogen ions are translocated across the cytoplasmic membrane), and thus conserves the redox energy in a proton gradient. The polypeptide is NADH-quinone oxidoreductase subunit D (Methylorubrum extorquens (strain PA1) (Methylobacterium extorquens)).